We begin with the raw amino-acid sequence, 585 residues long: Sodium/calcium exchanger NCL (585 aa).

5 helical membrane passes run 83–103 (VFLI…LSAG), 106–126 (LLLE…MLGA), 149–169 (VSVG…VIWG), 212–232 (IMAI…LGST), and 239–259 (VLIA…YQVF). EF-hand domains are found at residues 299–334 (PDEH…ISFE) and 339–374 (DKDD…WLIQ). Ca(2+) contacts are provided by D312, N314, D316, H318, E323, D352, D356, Q358, and E363. The next 2 helical transmembrane spans lie at 427–447 (WITI…AAFA) and 457–477 (FSAA…PLAT). N478 is a glycosylation site (N-linked (GlcNAc...) asparagine). Helical transmembrane passes span 505–525 (CGGV…IVYV), 532–552 (FSSE…FASF), and 558–578 (LWTC…VYIL).

This sequence belongs to the Ca(2+):cation antiporter (CaCA) (TC 2.A.19) family. As to expression, expressed in roots, leaves, stems, petals, stamens, ovules and siliques.

It is found in the cell membrane. The protein resides in the vacuole membrane. Possesses sodium/calcium exchanger (NCX) activity when expressed in a heterologous mammalian CHO-K1 cell system. Does not possess cation/proton exchanger (CAX) or sodium/proton (NHX) activity when expressed in a heterologous yeast cell system. Has the ability to bind calcium in vitro. Participates in the maintenance of calcium homeostasis. May play a role in auxin response, diurnal rhythm and flowering time. Involved in salt stress response. In Arabidopsis thaliana (Mouse-ear cress), this protein is Sodium/calcium exchanger NCL.